We begin with the raw amino-acid sequence, 222 residues long: MAAGSRTSLLLAFALLCLPWLQEAGAVQTVPLSRLFKEAMLQAHRAHQLAIDTYQEFISSWGMEAYITKEQKYSFLHDSQTSFCFSDSIPTSSNMEETQQKSNLELLHISLLLIESRLEPVRFLRSTFTNNLVYDTSDSDDYHLLKDLEEGIQMLMGRLEDGSHLTGQTLKQTYSKFDTNSHNHDALLKNYGLLHCFRKDMDKVETFLRMVQCRSVEGSCGF.

Positions 1 to 26 are cleaved as a signal peptide; the sequence is MAAGSRTSLLLAFALLCLPWLQEAGA. Zn(2+)-binding residues include His-44 and Glu-205. Cys-213 and Cys-220 form a disulfide bridge.

This sequence belongs to the somatotropin/prolactin family.

The protein localises to the secreted. Functionally, may be a novel gestational hormone required to compensate for absence of other members of the GH/CS cluster during gestation. The polypeptide is Chorionic somatomammotropin hormone-like 1 (CSHL1) (Homo sapiens (Human)).